Here is a 278-residue protein sequence, read N- to C-terminus: Trehalose monomycolate transport factor A (278 aa).

Methionine 1 is a topological domain (periplasmic). Residues 2 to 22 (VPLWFTLSALCFVGAAVLLYV) traverse the membrane as a helical segment. Topologically, residues 23–278 (DIDRRRGLGR…NGREASHFQR (256 aa)) are cytoplasmic. The tract at residues 200–278 (PPVPQNGSQA…NGREASHFQR (79 aa)) is disordered. Residues 269-278 (NGREASHFQR) show a composition bias toward basic and acidic residues.

As to quaternary structure, monomer. Interacts (via N-terminus) with MmpL3; active trehalose monomycolate (TMM) biosynthesis is not required for the complex formation. Interacts with MSMEG_5308.

The protein resides in the cell inner membrane. The protein localises to the cell septum. Its subcellular location is the cell tip. Functionally, required for MmpL3-dependent trehalose monomycolate (TMM) transport to the cell wall. Required for growth and cell elongation. This is Trehalose monomycolate transport factor A from Mycolicibacterium smegmatis (strain ATCC 700084 / mc(2)155) (Mycobacterium smegmatis).